Consider the following 423-residue polypeptide: MKAELIAVGTEILTGQIVNTNAQFLSEKMAELGIDVYFQTAVGDNEERLLSVITTASQRSNLVILCGGLGPTKDDLTKQTLAKYLRKDLVYDEQACQKLDDFFAKRKPSSRTPNNERQAQVIEGSIPLPNKTGLAVGGFITVDGISYVVLPGPPSELKPMVNEELVPLLSKQYSTLYSKVLRFFGIGESQLVTVLSDFIENQTDPTIAPYAKTGEVTLRLSTKTENQALADKKLGQLEAQLLSRKTLEGQPLADVFYGYGEDNSLARETFELLVKYDKTITAAESLTAGLFQSTLASFPGASQVFNGGFVTYSMEEKAKMLGLPLEELKSHGVVSAYTAEGMAEQARLLTGADIGVSLTGVAGPDMLEEQPAGTVFIGLATQNKVESIKVLISGRSRLDVRYIATLHAFNMVRKTLLKLENLL.

The protein belongs to the CinA family.

The chain is Putative competence-damage inducible protein from Streptococcus pyogenes serotype M1.